The primary structure comprises 397 residues: MFHRIEEALEDLKQGKVIIVCDDKNRENEGDFLALAEYITPETINFMITHGRGLVCVPLPEHYAKRLQLEPMVSQNTDSHHTAFTVSIDHISTTTGISAHERATTVRELLNPSSKGSDFNRPGHIFPLIAKDGGVLRRAGHTEAAVDLAKLCGTEPVGVICEIIKEDGTMARVPDLIQVAKQFDIKMITIEDLIAYRRHHETFVTKEVEITLPTEFGTFHAIGYTNSLDQKEHIALIKGDVSTDEPVLVRVHSECLTGDVFGSCRCDCGPQLHAALTQIEREGRGVLLYMRQEGRGIGLLNKLRAYKLQEEGLDTVEANEKLGFPADLRDYGIGAQILKDLGLQKLRLLTNNPRKIAGLQGYELEIVERVPLQMPTKQENKTYLQTKVTKLGHLLNL.

Positions 1–199 (MFHRIEEALE…IEDLIAYRRH (199 aa)) are DHBP synthase. D-ribulose 5-phosphate is bound by residues 26–27 (RE), Asp-31, 138–142 (RAGHT), and Glu-162. A Mg(2+)-binding site is contributed by Glu-27. Mg(2+) is bound at residue His-141. The segment at 200–397 (HETFVTKEVE…VTKLGHLLNL (198 aa)) is GTP cyclohydrolase II. 250 to 254 (RVHSE) contacts GTP. Residues Cys-255, Cys-266, and Cys-268 each contribute to the Zn(2+) site. Residues Gln-271, 293–295 (EGR), and Thr-315 each bind GTP. Residue Asp-327 is the Proton acceptor; for GTP cyclohydrolase activity of the active site. Residue Arg-329 is the Nucleophile; for GTP cyclohydrolase activity of the active site. Positions 350 and 355 each coordinate GTP.

The protein in the N-terminal section; belongs to the DHBP synthase family. It in the C-terminal section; belongs to the GTP cyclohydrolase II family. Mg(2+) serves as cofactor. Mn(2+) is required as a cofactor. The cofactor is Zn(2+).

It carries out the reaction D-ribulose 5-phosphate = (2S)-2-hydroxy-3-oxobutyl phosphate + formate + H(+). It catalyses the reaction GTP + 4 H2O = 2,5-diamino-6-hydroxy-4-(5-phosphoribosylamino)-pyrimidine + formate + 2 phosphate + 3 H(+). It functions in the pathway cofactor biosynthesis; riboflavin biosynthesis; 2-hydroxy-3-oxobutyl phosphate from D-ribulose 5-phosphate: step 1/1. The protein operates within cofactor biosynthesis; riboflavin biosynthesis; 5-amino-6-(D-ribitylamino)uracil from GTP: step 1/4. In terms of biological role, catalyzes the conversion of D-ribulose 5-phosphate to formate and 3,4-dihydroxy-2-butanone 4-phosphate. Its function is as follows. Catalyzes the conversion of GTP to 2,5-diamino-6-ribosylamino-4(3H)-pyrimidinone 5'-phosphate (DARP), formate and pyrophosphate. In Bacillus cytotoxicus (strain DSM 22905 / CIP 110041 / 391-98 / NVH 391-98), this protein is Riboflavin biosynthesis protein RibBA.